Reading from the N-terminus, the 89-residue chain is Small ribosomal subunit protein uS15 (89 aa).

This sequence belongs to the universal ribosomal protein uS15 family. As to quaternary structure, part of the 30S ribosomal subunit. Forms a bridge to the 50S subunit in the 70S ribosome, contacting the 23S rRNA.

Functionally, one of the primary rRNA binding proteins, it binds directly to 16S rRNA where it helps nucleate assembly of the platform of the 30S subunit by binding and bridging several RNA helices of the 16S rRNA. Forms an intersubunit bridge (bridge B4) with the 23S rRNA of the 50S subunit in the ribosome. This chain is Small ribosomal subunit protein uS15, found in Cupriavidus necator (strain ATCC 17699 / DSM 428 / KCTC 22496 / NCIMB 10442 / H16 / Stanier 337) (Ralstonia eutropha).